Reading from the N-terminus, the 1091-residue chain is Exonuclease/helicase subunit RexB (1091 aa).

This sequence belongs to the helicase family. AddB/RexB type 2 subfamily. In terms of assembly, heterodimer of RexA (AddA) and RexB. Mg(2+) is required as a cofactor.

Its function is as follows. Involved in DNA double-strand break repair. Is not involved in recombination during natural competence or in plasmid establishment. In terms of biological role, the heterodimer acts as both an ATP-dependent DNA helicase and an ATP-dependent, dual-direction single-stranded exonuclease. Recognizes the chi site generating a DNA molecule suitable for the initiation of homologous recombination. This subunit has 5' -&gt; 3' nuclease activity but not helicase activity. The polypeptide is Exonuclease/helicase subunit RexB (Streptococcus pneumoniae serotype 4 (strain ATCC BAA-334 / TIGR4)).